The sequence spans 380 residues: Cytochrome b (380 aa).

4 consecutive transmembrane segments (helical) span residues 34 to 54 (FGSL…LLAM), 78 to 99 (WLIR…YLHI), 114 to 134 (WNTG…GYVL), and 179 to 199 (FFAL…IHLT). Residues histidine 84 and histidine 98 each coordinate heme b. The heme b site is built by histidine 183 and histidine 197. An a ubiquinone-binding site is contributed by histidine 202. 4 helical membrane-spanning segments follow: residues 227 to 247 (LKDI…ALFS), 289 to 309 (LGGV…PFLH), 321 to 341 (LSQL…WVGS), and 348 to 368 (FIII…ILFP).

This sequence belongs to the cytochrome b family. As to quaternary structure, the cytochrome bc1 complex contains 11 subunits: 3 respiratory subunits (MT-CYB, CYC1 and UQCRFS1), 2 core proteins (UQCRC1 and UQCRC2) and 6 low-molecular weight proteins (UQCRH/QCR6, UQCRB/QCR7, UQCRQ/QCR8, UQCR10/QCR9, UQCR11/QCR10 and a cleavage product of UQCRFS1). This cytochrome bc1 complex then forms a dimer. Heme b serves as cofactor.

The protein resides in the mitochondrion inner membrane. Component of the ubiquinol-cytochrome c reductase complex (complex III or cytochrome b-c1 complex) that is part of the mitochondrial respiratory chain. The b-c1 complex mediates electron transfer from ubiquinol to cytochrome c. Contributes to the generation of a proton gradient across the mitochondrial membrane that is then used for ATP synthesis. The protein is Cytochrome b (MT-CYB) of Thalassoica antarctica (Antarctic petrel).